The chain runs to 449 residues: tRNA-2-methylthio-N(6)-dimethylallyladenosine synthase (449 aa).

Residues 3 to 118 (KKVFVKTFGC…LPELLAQREA (116 aa)) form the MTTase N-terminal domain. [4Fe-4S] cluster is bound by residues Cys12, Cys49, Cys81, Cys155, Cys159, and Cys162. The Radical SAM core domain maps to 141 to 376 (RVEGASAFVS…VINANIKSIS (236 aa)). The region spanning 377–440 (ESRVGTVQRI…AYTLRGEVVT (64 aa)) is the TRAM domain.

This sequence belongs to the methylthiotransferase family. MiaB subfamily. Monomer. [4Fe-4S] cluster is required as a cofactor.

Its subcellular location is the cytoplasm. The catalysed reaction is N(6)-dimethylallyladenosine(37) in tRNA + (sulfur carrier)-SH + AH2 + 2 S-adenosyl-L-methionine = 2-methylsulfanyl-N(6)-dimethylallyladenosine(37) in tRNA + (sulfur carrier)-H + 5'-deoxyadenosine + L-methionine + A + S-adenosyl-L-homocysteine + 2 H(+). Its function is as follows. Catalyzes the methylthiolation of N6-(dimethylallyl)adenosine (i(6)A), leading to the formation of 2-methylthio-N6-(dimethylallyl)adenosine (ms(2)i(6)A) at position 37 in tRNAs that read codons beginning with uridine. This is tRNA-2-methylthio-N(6)-dimethylallyladenosine synthase from Paracidovorax citrulli (strain AAC00-1) (Acidovorax citrulli).